A 182-amino-acid chain; its full sequence is Photosystem I assembly protein Ycf4 (182 aa).

The next 2 helical transmembrane spans lie at 22-42 (WSSVIFLGASGFLLTGLSSYL) and 63-83 (VMCFYGILGLIFSVYLGLTIF).

This sequence belongs to the Ycf4 family.

The protein resides in the plastid. The protein localises to the chloroplast thylakoid membrane. Functionally, seems to be required for the assembly of the photosystem I complex. This is Photosystem I assembly protein Ycf4 from Oltmannsiellopsis viridis (Marine flagellate).